A 184-amino-acid polypeptide reads, in one-letter code: Holliday junction branch migration complex subunit RuvA (184 aa).

Positions 1–64 (MIKAIEGVVT…EDANLLYGFL (64 aa)) are domain I. The interval 65 to 134 (DANEQKMFEM…IAELSDTKLI (70 aa)) is domain II. Positions 134–137 (ISDE) are flexible linker. The interval 138–184 (SVPSYQNEALLALEALGFKREKIVKILPDCKSENTSDLIKEALKKLG) is domain III.

It belongs to the RuvA family. As to quaternary structure, homotetramer. Forms an RuvA(8)-RuvB(12)-Holliday junction (HJ) complex. HJ DNA is sandwiched between 2 RuvA tetramers; dsDNA enters through RuvA and exits via RuvB. An RuvB hexamer assembles on each DNA strand where it exits the tetramer. Each RuvB hexamer is contacted by two RuvA subunits (via domain III) on 2 adjacent RuvB subunits; this complex drives branch migration. In the full resolvosome a probable DNA-RuvA(4)-RuvB(12)-RuvC(2) complex forms which resolves the HJ.

It localises to the cytoplasm. Functionally, the RuvA-RuvB-RuvC complex processes Holliday junction (HJ) DNA during genetic recombination and DNA repair, while the RuvA-RuvB complex plays an important role in the rescue of blocked DNA replication forks via replication fork reversal (RFR). RuvA specifically binds to HJ cruciform DNA, conferring on it an open structure. The RuvB hexamer acts as an ATP-dependent pump, pulling dsDNA into and through the RuvAB complex. HJ branch migration allows RuvC to scan DNA until it finds its consensus sequence, where it cleaves and resolves the cruciform DNA. This is Holliday junction branch migration complex subunit RuvA from Campylobacter concisus (strain 13826).